A 137-amino-acid chain; its full sequence is Putative pre-16S rRNA nuclease (137 aa).

Belongs to the YqgF nuclease family.

It localises to the cytoplasm. Could be a nuclease involved in processing of the 5'-end of pre-16S rRNA. The chain is Putative pre-16S rRNA nuclease from Bacillus mycoides (strain KBAB4) (Bacillus weihenstephanensis).